A 506-amino-acid polypeptide reads, in one-letter code: Tyrosine-protein kinase FRK (506 aa).

An SH3 domain is found at 43–111; sequence SQGQYFVALF…PSNYVAEDRS (69 aa). The SH2 domain occupies 117–209; that stretch reads WFFGAIKRAD…GLCVKLEKPC (93 aa). At T179 the chain carries Phosphothreonine. A Protein kinase domain is found at 235–492; sequence IQLLKRLGSG…TLHWKLEDYF (258 aa). Residues 241–249 and K263 each bind ATP; that span reads LGSGQFGEV. D355 (proton acceptor) is an active-site residue. Position 388 is a phosphotyrosine; by autocatalysis (Y388).

It belongs to the protein kinase superfamily. Tyr protein kinase family. SRC subfamily. As to quaternary structure, interacts (via the SH3-domain) with PTEN. Interacts with RB1. As to expression, highly expressed in stomach, small intestine and colon. Concentrated in the brush border membranes of epithelial cells, throughout the maturation axis of the adult small intestine.

It is found in the cytoplasm. The protein resides in the nucleus. The enzyme catalyses L-tyrosyl-[protein] + ATP = O-phospho-L-tyrosyl-[protein] + ADP + H(+). Non-receptor tyrosine-protein kinase that negatively regulates cell proliferation. Positively regulates PTEN protein stability through phosphorylation of PTEN on 'Tyr-336', which in turn prevents its ubiquitination and degradation, possibly by reducing its binding to NEDD4. May function as a tumor suppressor. The sequence is that of Tyrosine-protein kinase FRK (Frk) from Rattus norvegicus (Rat).